A 584-amino-acid polypeptide reads, in one-letter code: Arginine--tRNA ligase (584 aa).

A 'HIGH' region motif is present at residues 125–135; that stretch reads PNIAKEMHVGH.

Belongs to the class-I aminoacyl-tRNA synthetase family. Monomer.

It localises to the cytoplasm. It carries out the reaction tRNA(Arg) + L-arginine + ATP = L-arginyl-tRNA(Arg) + AMP + diphosphate. The chain is Arginine--tRNA ligase from Thermosynechococcus vestitus (strain NIES-2133 / IAM M-273 / BP-1).